Here is a 368-residue protein sequence, read N- to C-terminus: Agmatine deiminase (368 aa).

Cys-357 (amidino-cysteine intermediate) is an active-site residue.

This sequence belongs to the agmatine deiminase family. As to quaternary structure, homodimer.

It catalyses the reaction agmatine + H2O = N-carbamoylputrescine + NH4(+). The protein operates within amine and polyamine biosynthesis; putrescine biosynthesis via agmatine pathway; N-carbamoylputrescine from agmatine: step 1/1. Mediates the hydrolysis of agmatine into N-carbamoylputrescine in the arginine decarboxylase (ADC) pathway of putrescine biosynthesis, a basic polyamine. This Pseudomonas putida (strain ATCC 47054 / DSM 6125 / CFBP 8728 / NCIMB 11950 / KT2440) protein is Agmatine deiminase.